The following is a 101-amino-acid chain: NAD(P)H-quinone oxidoreductase subunit 4L, chloroplastic (101 aa).

Helical transmembrane passes span 2-22 (MLEH…YGLI), 32-52 (MCLE…SDFF), and 61-81 (IFSI…SAIV).

It belongs to the complex I subunit 4L family. NDH is composed of at least 16 different subunits, 5 of which are encoded in the nucleus.

Its subcellular location is the plastid. It localises to the chloroplast thylakoid membrane. It carries out the reaction a plastoquinone + NADH + (n+1) H(+)(in) = a plastoquinol + NAD(+) + n H(+)(out). The catalysed reaction is a plastoquinone + NADPH + (n+1) H(+)(in) = a plastoquinol + NADP(+) + n H(+)(out). Functionally, NDH shuttles electrons from NAD(P)H:plastoquinone, via FMN and iron-sulfur (Fe-S) centers, to quinones in the photosynthetic chain and possibly in a chloroplast respiratory chain. The immediate electron acceptor for the enzyme in this species is believed to be plastoquinone. Couples the redox reaction to proton translocation, and thus conserves the redox energy in a proton gradient. This Gossypium hirsutum (Upland cotton) protein is NAD(P)H-quinone oxidoreductase subunit 4L, chloroplastic.